The sequence spans 394 residues: Elongation factor Tu (394 aa).

Positions 10–204 (KPHVNVGTIG…AVDSYIPQPE (195 aa)) constitute a tr-type G domain. The interval 19 to 26 (GHVDHGKT) is G1. 19 to 26 (GHVDHGKT) is a binding site for GTP. Threonine 26 provides a ligand contact to Mg(2+). Residues 60–64 (GITIS) form a G2 region. Residues 81–84 (DCPG) are G3. GTP contacts are provided by residues 81–85 (DCPGH) and 136–139 (NKCD). Residues 136-139 (NKCD) form a G4 region. The G5 stretch occupies residues 174 to 176 (SAV).

Belongs to the TRAFAC class translation factor GTPase superfamily. Classic translation factor GTPase family. EF-Tu/EF-1A subfamily. In terms of assembly, monomer.

It localises to the cytoplasm. The catalysed reaction is GTP + H2O = GDP + phosphate + H(+). Its function is as follows. GTP hydrolase that promotes the GTP-dependent binding of aminoacyl-tRNA to the A-site of ribosomes during protein biosynthesis. The polypeptide is Elongation factor Tu (Akkermansia muciniphila (strain ATCC BAA-835 / DSM 22959 / JCM 33894 / BCRC 81048 / CCUG 64013 / CIP 107961 / Muc)).